The chain runs to 355 residues: tRNA-specific 2-thiouridylase MnmA (355 aa).

ATP-binding positions include Leu6–Ser13 and Leu33. Cys100 acts as the Nucleophile in catalysis. Cys100 and Cys195 form a disulfide bridge. ATP is bound at residue Gly123. Positions Lys145–Gln147 are interaction with tRNA. Cys195 (cysteine persulfide intermediate) is an active-site residue.

It belongs to the MnmA/TRMU family.

It is found in the cytoplasm. The catalysed reaction is S-sulfanyl-L-cysteinyl-[protein] + uridine(34) in tRNA + AH2 + ATP = 2-thiouridine(34) in tRNA + L-cysteinyl-[protein] + A + AMP + diphosphate + H(+). Catalyzes the 2-thiolation of uridine at the wobble position (U34) of tRNA, leading to the formation of s(2)U34. The protein is tRNA-specific 2-thiouridylase MnmA of Borrelia garinii subsp. bavariensis (strain ATCC BAA-2496 / DSM 23469 / PBi) (Borreliella bavariensis).